A 276-amino-acid chain; its full sequence is Formamidopyrimidine-DNA glycosylase (276 aa).

Proline 2 serves as the catalytic Schiff-base intermediate with DNA. Catalysis depends on glutamate 3, which acts as the Proton donor. Lysine 58 acts as the Proton donor; for beta-elimination activity in catalysis. Residues histidine 94, arginine 112, and arginine 157 each coordinate DNA. The FPG-type zinc-finger motif lies at 242 to 276; the sequence is FVYDRAGEPCRVCGAPIRQIVQGQRSTYFCPNCQR. The Proton donor; for delta-elimination activity role is filled by arginine 266.

The protein belongs to the FPG family. As to quaternary structure, monomer. It depends on Zn(2+) as a cofactor.

The enzyme catalyses Hydrolysis of DNA containing ring-opened 7-methylguanine residues, releasing 2,6-diamino-4-hydroxy-5-(N-methyl)formamidopyrimidine.. It catalyses the reaction 2'-deoxyribonucleotide-(2'-deoxyribose 5'-phosphate)-2'-deoxyribonucleotide-DNA = a 3'-end 2'-deoxyribonucleotide-(2,3-dehydro-2,3-deoxyribose 5'-phosphate)-DNA + a 5'-end 5'-phospho-2'-deoxyribonucleoside-DNA + H(+). In terms of biological role, involved in base excision repair of DNA damaged by oxidation or by mutagenic agents. Acts as a DNA glycosylase that recognizes and removes damaged bases. Has a preference for oxidized purines, such as 7,8-dihydro-8-oxoguanine (8-oxoG). Has AP (apurinic/apyrimidinic) lyase activity and introduces nicks in the DNA strand. Cleaves the DNA backbone by beta-delta elimination to generate a single-strand break at the site of the removed base with both 3'- and 5'-phosphates. The sequence is that of Formamidopyrimidine-DNA glycosylase from Burkholderia pseudomallei (strain 1710b).